The chain runs to 263 residues: Endonuclease 8 (263 aa).

The active-site Schiff-base intermediate with DNA is Pro2. Glu3 (proton donor) is an active-site residue. Lys53 (proton donor; for beta-elimination activity) is an active-site residue. DNA contacts are provided by Gln70, Arg125, and Asn169. The FPG-type zinc-finger motif lies at 229–263 (KVFHRDGEPCERCGSIIEKTTLSSRPFYWCPGCQH). Arg253 functions as the Proton donor; for delta-elimination activity in the catalytic mechanism.

Belongs to the FPG family. Requires Zn(2+) as cofactor.

The enzyme catalyses 2'-deoxyribonucleotide-(2'-deoxyribose 5'-phosphate)-2'-deoxyribonucleotide-DNA = a 3'-end 2'-deoxyribonucleotide-(2,3-dehydro-2,3-deoxyribose 5'-phosphate)-DNA + a 5'-end 5'-phospho-2'-deoxyribonucleoside-DNA + H(+). Involved in base excision repair of DNA damaged by oxidation or by mutagenic agents. Acts as a DNA glycosylase that recognizes and removes damaged bases. Has a preference for oxidized pyrimidines, such as thymine glycol, 5,6-dihydrouracil and 5,6-dihydrothymine. Has AP (apurinic/apyrimidinic) lyase activity and introduces nicks in the DNA strand. Cleaves the DNA backbone by beta-delta elimination to generate a single-strand break at the site of the removed base with both 3'- and 5'-phosphates. The sequence is that of Endonuclease 8 from Shigella sonnei (strain Ss046).